We begin with the raw amino-acid sequence, 128 residues long: SGSCTTQTCWLQLPEFREVGNYLKEKYHRALKVDLLRGAGNSAASRGAIAETFSSISRKELVHLEDSPDYCLENRTLGLPGTEGRECLKKGKNLSKWEKRSCKRLCGECGLAVEERKAEMVSSCNCKF.

A lipid anchor (O-palmitoleoyl serine) is attached at Ser1. Disulfide bonds link Cys71–Cys109 and Cys87–Cys102. Residues Asn74 and Asn93 are each glycosylated (N-linked (GlcNAc...) asparagine).

Belongs to the Wnt family. In terms of processing, palmitoleoylation is required for efficient binding to frizzled receptors. Depalmitoleoylation leads to Wnt signaling pathway inhibition. Post-translationally, proteolytic processing by tiki1 and tiki2 promotes oxidation and formation of large disulfide-bond oligomers, leading to inactivation of wnt8.

Its subcellular location is the secreted. The protein localises to the extracellular space. It is found in the extracellular matrix. Ligand for members of the frizzled family of seven transmembrane receptors. Probable developmental protein. May be a signaling molecule which affects the development of discrete regions of tissues. Is likely to signal over only few cell diameters. In Thunnus thynnus (Atlantic bluefin tuna), this protein is Protein Wnt-8 (wnt8).